We begin with the raw amino-acid sequence, 147 residues long: Hemoglobin subunit gamma-1 (147 aa).

The Globin domain occupies 3–147; the sequence is NFTAEDKAAI…VASALGSRYH (145 aa). Thr-13 is modified (phosphothreonine). Residues Ser-45, Ser-51, and Ser-53 each carry the phosphoserine modification. Residue Lys-60 is modified to N6-acetyllysine. His-64 serves as a coordination point for heme b. At Lys-83 the chain carries N6-acetyllysine. A heme b-binding site is contributed by His-93. Cys-94 bears the S-nitrosocysteine mark. At Ser-140 the chain carries Phosphoserine.

This sequence belongs to the globin family. Heterotetramer of two alpha chains and two gamma chains in fetal hemoglobin (Hb F). Red blood cells.

Its function is as follows. Gamma chains make up the fetal hemoglobin F, in combination with alpha chains. This Plecturocebus moloch (Dusky titi monkey) protein is Hemoglobin subunit gamma-1 (HBG1).